The chain runs to 262 residues: Type III pantothenate kinase (262 aa).

6–13 (DVGNTNAV) lines the ATP pocket. Substrate contacts are provided by residues Tyr-100 and 107–110 (GADR). Asp-109 (proton acceptor) is an active-site residue. Asp-129 is a K(+) binding site. ATP is bound at residue Thr-132. A substrate-binding site is contributed by Thr-184.

Belongs to the type III pantothenate kinase family. In terms of assembly, homodimer. NH4(+) serves as cofactor. K(+) is required as a cofactor.

It is found in the cytoplasm. It carries out the reaction (R)-pantothenate + ATP = (R)-4'-phosphopantothenate + ADP + H(+). It functions in the pathway cofactor biosynthesis; coenzyme A biosynthesis; CoA from (R)-pantothenate: step 1/5. Its function is as follows. Catalyzes the phosphorylation of pantothenate (Pan), the first step in CoA biosynthesis. In Bacillus cereus (strain B4264), this protein is Type III pantothenate kinase.